We begin with the raw amino-acid sequence, 39 residues long: Potassium channel toxin alpha-KTx 2.17 (39 aa).

3 disulfides stabilise this stretch: Cys7-Cys29, Cys13-Cys34, and Cys17-Cys36. Ile39 is subject to Isoleucine amide.

This sequence belongs to the short scorpion toxin superfamily. Potassium channel inhibitor family. Alpha-KTx 02 subfamily. Expressed by the venom gland.

It is found in the secreted. Functionally, blocks human voltage-gated potassium channels Kv1.1/KCNA1 (IC(50)=4.8 nM) and Kv1.2/KCNA2 (IC(50)=2.9 nM). This chain is Potassium channel toxin alpha-KTx 2.17, found in Centruroides tecomanus (Scorpion).